Here is a 61-residue protein sequence, read N- to C-terminus: ATP synthase subunit J, mitochondrial (61 aa).

A helical membrane pass occupies residues 13 to 32 (LVKYYWPFFVGFGLTFYGVA).

F-type ATP synthases have 2 components, the catalytic core F(1) and the membrane-embedded component F(0), linked together by a central stalk and a peripheral stalk. The central stalk, also called rotor shaft, is often seen as part of F(1). The peripheral stalk is seen as part of F(0). F(0) contains the membrane channel next to the rotor. F-type ATP synthases form dimers but each monomer functions independently in ATP generation. The dimer consists of 18 different polypeptides: ATP1 (subunit alpha, part of F(1), 3 molecules per monomer), ATP2 (subunit beta, part of F(1), 3 molecules per monomer), ATP3 (subunit gamma, part of the central stalk), ATP4 (subunit b, part of the peripheral stalk), ATP5/OSCP (subunit 5/OSCP, part of the peripheral stalk), ATP6 (subunit a, part of the peripheral stalk), ATP7 (subunit d, part of the peripheral stalk), ATP8 (subunit 8, part of the peripheral stalk), OLI1 (subunit c, part of the rotor, 10 molecules per monomer), ATP14 (subunit h, part of the peripheral stalk), ATP15 (subunit epsilon, part of the central stalk), ATP16 (subunit delta, part of the central stalk), ATP17 (subunit f, part of the peripheral stalk), ATP18 (subunit i/j, part of the peripheral stalk). Dimer-specific subunits are ATP19 (subunit k, at interface between monomers), ATP20 (subunit g, at interface between monomers), TIM11 (subunit e, at interface between monomers). Also contains subunit L.

Its subcellular location is the mitochondrion inner membrane. Functionally, mitochondrial membrane ATP synthase (F(1)F(0) ATP synthase or Complex V) produces ATP from ADP in the presence of a proton gradient across the membrane which is generated by electron transport complexes of the respiratory chain. F-type ATP synthases consist of two structural domains, F(1) - containing the extramembraneous catalytic core, and F(0) - containing the membrane proton channel, linked together by a central stalk and a peripheral stalk. During catalysis, ATP synthesis in the catalytic domain of F(1) is coupled via a rotary mechanism of the central stalk subunits to proton translocation. Part of the complex F(0) domain. Minor subunit located with subunit a/ATP6 in the membrane. In Pichia angusta (Yeast), this protein is ATP synthase subunit J, mitochondrial.